Reading from the N-terminus, the 476-residue chain is RuvB-like helicase 2 (476 aa).

ATP is bound at residue 76 to 83 (GPPSTGKT).

Belongs to the RuvB family. As to quaternary structure, may form heterododecamers with RVB1. Component of the SWR1 chromatin remodeling complex, the INO80 chromatin remodeling complex, and of the R2TP complex.

The protein localises to the nucleus. The enzyme catalyses ATP + H2O = ADP + phosphate + H(+). DNA helicase which participates in several chromatin remodeling complexes, including the SWR1 and the INO80 complexes. The SWR1 complex mediates the ATP-dependent exchange of histone H2A for the H2A variant HZT1 leading to transcriptional regulation of selected genes by chromatin remodeling. The INO80 complex remodels chromatin by shifting nucleosomes and is involved in DNA repair. Also involved in pre-rRNA processing. This chain is RuvB-like helicase 2 (RVB2), found in Candida glabrata (strain ATCC 2001 / BCRC 20586 / JCM 3761 / NBRC 0622 / NRRL Y-65 / CBS 138) (Yeast).